The chain runs to 400 residues: 3-phenylpropionate/cinnamic acid dioxygenase ferredoxin--NAD(+) reductase component (400 aa).

5–36 contacts FAD; sequence TIIIVGGGQAAAMAAASLRQQGFTGELHLFSD. Residue 146–174 coordinates NAD(+); it reads SVVIVGAGTIGLELAASATQRGCKATVIE.

Belongs to the bacterial ring-hydroxylating dioxygenase ferredoxin reductase family. As to quaternary structure, this dioxygenase system consists of four proteins: the two subunits of the hydroxylase component (HcaE and HcaF), a ferredoxin (HcaC) and a ferredoxin reductase (HcaD). FAD is required as a cofactor.

It carries out the reaction 2 reduced [2Fe-2S]-[ferredoxin] + NAD(+) + H(+) = 2 oxidized [2Fe-2S]-[ferredoxin] + NADH. The protein operates within aromatic compound metabolism; 3-phenylpropanoate degradation. Its function is as follows. Part of the multicomponent 3-phenylpropionate dioxygenase, that converts 3-phenylpropionic acid (PP) and cinnamic acid (CI) into 3-phenylpropionate-dihydrodiol (PP-dihydrodiol) and cinnamic acid-dihydrodiol (CI-dihydrodiol), respectively. This chain is 3-phenylpropionate/cinnamic acid dioxygenase ferredoxin--NAD(+) reductase component, found in Escherichia coli O7:K1 (strain IAI39 / ExPEC).